The following is a 772-amino-acid chain: Calcium-binding mitochondrial carrier protein (772 aa).

Positions 1–377 (MFANRVRQAQ…SISDFEKSTG (377 aa)) are N-terminal domain. EF-hand domains lie at 132 to 165 (LDAD…ELMA), 166 to 201 (KPEA…SLDP), 235 to 270 (LQQE…VKLR), and 347 to 382 (ITPL…NINK). Ca(2+)-binding residues include aspartate 145, aspartate 147, threonine 149, tyrosine 151, glutamate 156, aspartate 179, aspartate 181, asparagine 183, tyrosine 185, and aspartate 190. Positions 360, 362, 364, 366, and 371 each coordinate Ca(2+). The interval 378–422 (LNINKIGGGTNYSDSYPSDSHVTIQNSSTTPSPSTPITNTAAAIA) is linker loop domain. The segment at 432-720 (AQQVLESIEN…KALLPDAEYK (289 aa)) is carrier domain. Solcar repeat units follow at residues 436-526 (LESI…LRDL), 535-616 (IYFP…MKTI), and 624-712 (LGPM…LQKA). 6 helical membrane passes run 442–459 (FALG…VYPI), 501–520 (GILP…LTVN), 545–558 (GFAG…TNPL), 591–610 (GAGA…FPTY), 630–647 (LLAG…VTPA), and 687–706 (GALA…LVSY). The interval 721 to 772 (PPTNAPITQKDFDVIRGNTNTVQRVIDMESKFGTLHQTRDNNKSSNGGENKN) is C-terminal domain. A disordered region spans residues 751–772 (KFGTLHQTRDNNKSSNGGENKN). Over residues 763–772 (KSSNGGENKN) the composition is skewed to low complexity.

It belongs to the mitochondrial carrier (TC 2.A.29) family. As to quaternary structure, homodimer (via N-terminus).

Its subcellular location is the mitochondrion inner membrane. Functionally, mitochondrial and calcium-binding carrier that catalyzes the calcium-dependent exchange of cytoplasmic glutamate with mitochondrial aspartate across the mitochondrial inner membrane. The protein is Calcium-binding mitochondrial carrier protein (mcfO) of Dictyostelium discoideum (Social amoeba).